A 458-amino-acid polypeptide reads, in one-letter code: Bifunctional protein GlmU (458 aa).

Residues 1 to 228 (MHPKLDILIL…DWEVLGVNSK (228 aa)) form a pyrophosphorylase region. Residues 10–13 (LAAG), Lys24, Gln75, 80–81 (GT), 102–104 (YGD), Gly139, Glu153, Asn168, and Asn226 contribute to the UDP-N-acetyl-alpha-D-glucosamine site. Position 104 (Asp104) interacts with Mg(2+). Asn226 is a binding site for Mg(2+). The linker stretch occupies residues 229–249 (AQLAELERIHQNEVAQRLLAD). An N-acetyltransferase region spans residues 250 to 458 (GVTLMDPARL…KRPIKPKKEG (209 aa)). The UDP-N-acetyl-alpha-D-glucosamine site is built by Arg332 and Lys350. His362 (proton acceptor) is an active-site residue. UDP-N-acetyl-alpha-D-glucosamine is bound by residues Tyr365 and Asn376. Acetyl-CoA-binding positions include Ala379, 385–386 (NY), Ser404, Ala422, and Arg439.

In the N-terminal section; belongs to the N-acetylglucosamine-1-phosphate uridyltransferase family. This sequence in the C-terminal section; belongs to the transferase hexapeptide repeat family. Homotrimer. The cofactor is Mg(2+).

Its subcellular location is the cytoplasm. It carries out the reaction alpha-D-glucosamine 1-phosphate + acetyl-CoA = N-acetyl-alpha-D-glucosamine 1-phosphate + CoA + H(+). The enzyme catalyses N-acetyl-alpha-D-glucosamine 1-phosphate + UTP + H(+) = UDP-N-acetyl-alpha-D-glucosamine + diphosphate. The protein operates within nucleotide-sugar biosynthesis; UDP-N-acetyl-alpha-D-glucosamine biosynthesis; N-acetyl-alpha-D-glucosamine 1-phosphate from alpha-D-glucosamine 6-phosphate (route II): step 2/2. It participates in nucleotide-sugar biosynthesis; UDP-N-acetyl-alpha-D-glucosamine biosynthesis; UDP-N-acetyl-alpha-D-glucosamine from N-acetyl-alpha-D-glucosamine 1-phosphate: step 1/1. It functions in the pathway bacterial outer membrane biogenesis; LPS lipid A biosynthesis. Its function is as follows. Catalyzes the last two sequential reactions in the de novo biosynthetic pathway for UDP-N-acetylglucosamine (UDP-GlcNAc). The C-terminal domain catalyzes the transfer of acetyl group from acetyl coenzyme A to glucosamine-1-phosphate (GlcN-1-P) to produce N-acetylglucosamine-1-phosphate (GlcNAc-1-P), which is converted into UDP-GlcNAc by the transfer of uridine 5-monophosphate (from uridine 5-triphosphate), a reaction catalyzed by the N-terminal domain. This is Bifunctional protein GlmU from Thiobacillus denitrificans (strain ATCC 25259 / T1).